Consider the following 376-residue polypeptide: Lipid-A-disaccharide synthase (376 aa).

Belongs to the LpxB family.

It carries out the reaction a lipid X + a UDP-2-N,3-O-bis[(3R)-3-hydroxyacyl]-alpha-D-glucosamine = a lipid A disaccharide + UDP + H(+). It participates in bacterial outer membrane biogenesis; LPS lipid A biosynthesis. Its function is as follows. Condensation of UDP-2,3-diacylglucosamine and 2,3-diacylglucosamine-1-phosphate to form lipid A disaccharide, a precursor of lipid A, a phosphorylated glycolipid that anchors the lipopolysaccharide to the outer membrane of the cell. In Hydrogenovibrio crunogenus (strain DSM 25203 / XCL-2) (Thiomicrospira crunogena), this protein is Lipid-A-disaccharide synthase.